The chain runs to 614 residues: Putative N(6)-adenosine-methyltransferase MT-A70-like (614 aa).

Positions 59–78 are disordered; that stretch reads TPPLTNFNPPKSSSLQQLPQ. Residues 67–78 are compositionally biased toward low complexity; it reads PPKSSSLQQLPQ. Residues 391–392 and Asp-409 each bind S-adenosyl-L-methionine; that span reads DI. Positions 479-492 are positively charged region required for RNA-binding; the sequence is RIIRTGRTGHWLNH. S-adenosyl-L-methionine-binding positions include Lys-526, 549–552, and 562–563; these read RMHN and NQ. A disordered region spans residues 589-614; sequence PASPSRASAMELDSSVAAQTTTSAMM. The span at 604–614 shows a compositional bias: polar residues; it reads VAAQTTTSAMM.

This sequence belongs to the MT-A70-like family.

Its subcellular location is the nucleus. The catalysed reaction is an adenosine in mRNA + S-adenosyl-L-methionine = an N(6)-methyladenosine in mRNA + S-adenosyl-L-homocysteine + H(+). Its function is as follows. Putative N6-methyltransferase that methylates adenosine residues of some mRNAs. N6-methyladenosine (m6A), which is present at internal sites of some mRNAs, may play a role in the efficiency of mRNA splicing, transport or translation. This is Putative N(6)-adenosine-methyltransferase MT-A70-like from Medicago truncatula (Barrel medic).